Consider the following 501-residue polypeptide: MLTPRVLRALGWTGLFFLLLSPSNVLGASLSRDLETPPFLSFDPSNISINGAPLTEVPHAPSTESVSTNSESTNEHTITETTGKNAYIHNNASTDKQNANDTHKMPNILCDTEEVFVFLNETGRFVCTLKVDPPSDSEWSNFVLDLIFNPIEYHANEKNVEAARIAGLYGVPGSDYAYPRQSELISSIRRDPQGTFWTSPSPHGNKYFIWINKTTNTMGVEIRNVDYADNGYMQVIMRDHFNRPLIDKHIYIRVCQRPASVDVLAPPVLSGENYKASCIVRHFYPPGSVYVSWRQNGNIATPRKDRDGSFWWFESGRGATLVSTITLGNSGIDFPPKISCLVAWKQGDMISTTNATAIPTVYHHPRLSLAFKDGYAICTIECVPSEITVRWLVHDEAQPNTTYNTVVTGLCRTIDRHRNLLSRIPVWDNWTKTKYTCRLIGYPFDEDKFQDSEYYDATPSARGTPMVITVTAVLGLAVILGMGIIMTALCLYNSTRKNIRL.

A signal peptide spans 1–27 (MLTPRVLRALGWTGLFFLLLSPSNVLG). At 28 to 465 (ASLSRDLETP…DATPSARGTP (438 aa)) the chain is on the virion surface side. An N-linked (GlcNAc...) asparagine; by host glycan is attached at Asn46. The interval 53–87 (PLTEVPHAPSTESVSTNSESTNEHTITETTGKNAY) is disordered. The segment covering 62–72 (STESVSTNSES) has biased composition (low complexity). N-linked (GlcNAc...) asparagine; by host glycosylation is found at Asn91, Asn100, Asn120, Asn212, Asn354, Asn400, and Asn429. The Ig-like domain occupies 258-356 (PASVDVLAPP…GDMISTTNAT (99 aa)). The chain crosses the membrane as a helical span at residues 466–492 (MVITVTAVLGLAVILGMGIIMTALCLY). Residues 493–501 (NSTRKNIRL) are Cytoplasmic-facing.

Belongs to the herpesviridae glycoprotein C family.

It localises to the secreted. It is found in the host cell membrane. In terms of biological role, may play an immunoevasive role in the pathogenesis of Marek's disease. It is a candidate for causing the early-stage immunosuppression that occurs after MDHV infection. The protein is Envelope glycoprotein C homolog (gC) of Gallus gallus (Chicken).